The following is a 161-amino-acid chain: Transcriptional repressor NrdR (161 aa).

A compositionally biased stretch (polar residues) spans 1–11 (MRCPSCNSLDT). The segment at 1-20 (MRCPSCNSLDTQVKDSRPTE) is disordered. A zinc finger spans residues 3–34 (CPSCNSLDTQVKDSRPTEDSSVIRRRRVCVTC). An ATP-cone domain is found at 49–139 (LTVIKRNGRR…VYRNFREAKD (91 aa)).

Belongs to the NrdR family. Zn(2+) serves as cofactor.

In terms of biological role, negatively regulates transcription of bacterial ribonucleotide reductase nrd genes and operons by binding to NrdR-boxes. The sequence is that of Transcriptional repressor NrdR from Bradyrhizobium sp. (strain ORS 278).